An 85-amino-acid polypeptide reads, in one-letter code: Large ribosomal subunit protein bL27 (85 aa).

The tract at residues 1 to 22 (MAHKKAGGSSRNGRDSHSKRLG) is disordered.

This sequence belongs to the bacterial ribosomal protein bL27 family.

In Nitrosomonas europaea (strain ATCC 19718 / CIP 103999 / KCTC 2705 / NBRC 14298), this protein is Large ribosomal subunit protein bL27.